The sequence spans 243 residues: Trypsin (243 aa).

An N-terminal signal peptide occupies residues 1–15; that stretch reads MKFLLLCVLLGAAAA. Positions 16–20 are cleaved as a propeptide — activation peptide; it reads FDDDK. The region spanning 21-241 is the Peptidase S1 domain; that stretch reads IIGGATCAKS…YNAWIQNTIA (221 aa). 6 disulfide bridges follow: cysteine 27/cysteine 157, cysteine 45/cysteine 61, cysteine 129/cysteine 230, cysteine 136/cysteine 203, cysteine 168/cysteine 182, and cysteine 193/cysteine 217. Residue histidine 60 is the Charge relay system of the active site. Glutamate 72, asparagine 74, and glutamate 82 together coordinate Ca(2+). Aspartate 104 serves as the catalytic Charge relay system. The Charge relay system role is filled by serine 197.

Belongs to the peptidase S1 family. Requires Ca(2+) as cofactor.

Its subcellular location is the secreted. The protein resides in the extracellular space. It catalyses the reaction Preferential cleavage: Arg-|-Xaa, Lys-|-Xaa.. This chain is Trypsin, found in Xenopus laevis (African clawed frog).